We begin with the raw amino-acid sequence, 78 residues long: Large ribosomal subunit protein eL20 (78 aa).

The protein belongs to the eukaryotic ribosomal protein eL20 family. In terms of assembly, part of the 50S ribosomal subunit. Binds 23S rRNA.

This is Large ribosomal subunit protein eL20 from Pyrobaculum neutrophilum (strain DSM 2338 / JCM 9278 / NBRC 100436 / V24Sta) (Thermoproteus neutrophilus).